The sequence spans 29 residues: Beta-theraphotoxin-Gr1a (29 aa).

3 cysteine pairs are disulfide-bonded: Cys-2-Cys-16, Cys-9-Cys-21, and Cys-15-Cys-25.

This sequence belongs to the neurotoxin 30 (phrixotoxin) family. As to expression, expressed by the venom gland.

The protein resides in the secreted. Functionally, inhibits voltage-gated sodium channels Nav1.1/SCN1A (IC(50)=630 nM), Nav1.2/SCN2A (IC(50)=230 nM), Nav1.3/SCN3A (IC(50)=770 nM), Nav1.4/SCN4A (IC(50)=1290 nM), Nav1.6/SCN8A (IC(50)=630 nM), Nav1.7/SCN9A (IC(50)=15.3-1000 nM) and potassium channels Kv11.1/KCNH2 (IC(50)=4.2 uM). This chain is Beta-theraphotoxin-Gr1a, found in Grammostola rosea (Chilean rose tarantula).